The sequence spans 462 residues: Cysteine--tRNA ligase (462 aa).

Residue cysteine 24 participates in Zn(2+) binding. The 'HIGH' region signature appears at 26-36 (PTVYDDAHLGH). Cysteine 199, histidine 224, and glutamate 228 together coordinate Zn(2+). The short motif at 256 to 260 (KMSKS) is the 'KMSKS' region element. Lysine 259 is an ATP binding site.

It belongs to the class-I aminoacyl-tRNA synthetase family. In terms of assembly, monomer. The cofactor is Zn(2+).

It is found in the cytoplasm. The catalysed reaction is tRNA(Cys) + L-cysteine + ATP = L-cysteinyl-tRNA(Cys) + AMP + diphosphate. The protein is Cysteine--tRNA ligase of Campylobacter jejuni subsp. jejuni serotype O:23/36 (strain 81-176).